A 2148-amino-acid polypeptide reads, in one-letter code: MNHVTIKQSDTRADPFRVFIFGDQSSCNLSNLQLLLFKKSNVYLASFIDQVNLTLRHEIARLTAAERQSFPAFSSVQNLVARALKKDTSVALESTLATIYHLCCFINYFGDGQEAYPTGPTTHVSGLCIGALAAAAVSSSKSLAELVQAGIDAVRVSLKVGLLVARTAALFSHQESNGTSSSPWSYALPDSQLPLALAEEAIESYQAKTNIPPLSLPYISAKGQNSWTVSGPPAIVQHFLETSQFEKTLRLTPLAVHAPYHAPHIFSAIDVQHIIRAVGPVSSFSSKLSFISSSSSRNLPTGLKFQDLLYRAVEDILILPLDLREAAENIRLVLEATDNVQQCALFPISTGVGPSLKQSFSPAMASRVSIVDCIMERVAADAGPKSTSGPKPSESKIAIIGMSGRFPESADVEAFWDLLHQGLDVHRPVPPDRFNGELYYDVTGKRKNTCKVMHGCWINDPGLFDAKFFNISPKEAEQSDPGQRLALATAYEALEAAGVVADRTPSTQRDRVGVFYGMTSDDYREVSCGQNVDTYFIPGGNRAFTPGKINYFFKYCGPSVSVDTACSSSLAAIHLACNSIWRNECDTAIAGGTNVMSNPDSFVGLDRGYFLSRTGNCHTFDDDADGYCRADAVGTVILKRLEDAIADHDPILGVISGALTNHSADAVSITRPHSGAQEEIFSKLLTESGVHPHQVSYIEMHGTGTQAGDATEMTSVLNCFAPSTSPRRLPHESLHLGSTKANVGHSESASGVSALIKVLLMMEKNIIPPHCGIKGKINHKFPTDLDERNVHIAKTATQWNRRNELNNIRRAFVNNFSAAGGNTALLVEDYPLRIADSAQQDARTAHVVTVSAKSIKSLKGNLENLKKFVQKQAFTEGFLPKLSYTTTSRRMHHPFRVAIPAANSEQLLCALDEELKHDSYTCSSESPVAFVFSGQGSQYSAMGQHLLHFTIFRDEVHAYDILAQRHGFPSIMPLIDGSVDIEDLEPLVVQLGTVCVQMALASLWMALGMRPAYVVGHSLGHYAALKVAGVLTASDTIYLVAMRARLLQNKCSRGSHAMLAIRSSAAEIQAHLDEGIHDIACINGPQDTVVSGCIDDIDRLSQKLMDKGIKATRVNVPFAFHSAQVDPILDELEAIASQVEFHAPRVAIGCPLLGKTFTAGETPSLEAKHIRRHCRETVNFLDVLRSAKDDGFVSEKTAWIEIGPHTVCSNLVKANINQDITAVPSLMRNKDGWQVLASSVATLYRHGLSVAWDEYHHDFEACKQVLRLPAYSWDNKLYWIDYVHDWLLTRGDPPVQAAAPLPAPPSSFSTASVHRMVHESVEKGKLTLTAECEFTNEQLREVVYGHVVNGNRVCSSSLYTDFGVTLGSYILEKYRPDLQGHAVDVQDMVVNKALVHKEGPTMLLRIDVVLDTTDSKAASMSIYSVNSKGNKTADHAQSSLHFEQPKVWLKSWDSTQYYVERSIEWLKEKADQGLNSRMSSGVIYKLFSSLVDYSTAYKGMQEAIVNTEDFEATALVRFQVDEGNFRCNPMWVDSCGQLAGFLMNGHAKTPKDQVFINHGWQYFRTVRKFSRDKTYRTYVRMRCVEGTTYAGDVYIFDDEGIVGVCGSITFQGIPRKVLNTAMPPPKSQNEAPVRSGPAKPAAKPPRSASSEHSGHFARHANIEPLKLDAALKSATTARNPMLPVFKIVAEEIGIPSASVDNGLVFADYGVDSLLSLSISGRLREELDLDVESSAFETCATLADLAAQLGLDTFSSDQSSGQSSSSGGLSPRSDSIGEITSSVTTPPSLSPRGSVSGSQCKDVCAILAEEIGVSMGEITNDTDLGALGMDSLMSLAVLSRLREELELDLEGDFFVSHPNFSSFKHMFQQGHGDEVEPEPSAELKQYRATSTLLQGNPKSALYTLFLLPDGSGSSFSYAPINAVRKDVCVFGLNCPWLKSAEKLVQFGLKGLATLYVEEIRRRAPHGPYNLGGWSAGGICAYEAAIQFTREGETVERLILLDSPNPIGLEKLPARLFDFVNGLGLFGDGKAPDWLLAHFLAFIDALDEWKPVPWDKALGGNSPPPMTYILWAEDGICKGTDARPEYRDDDPREMKWLLENRTNFGGNNWDVLLGQQSLSIERIQDANHFTMLRKGKNTERVAAFIRSTFG.

Residues 19-261 (FIFGDQSSCN…TPLAVHAPYH (243 aa)) are N-terminal acylcarrier protein transacylase domain (SAT). A Ketosynthase family 3 (KS3) domain is found at 394 to 829 (ESKIAIIGMS…GGNTALLVED (436 aa)). Active-site for beta-ketoacyl synthase activity residues include Cys-566, His-701, and His-745. Residues 930–1236 (FVFSGQGSQY…MRNKDGWQVL (307 aa)) form a malonyl-CoA:ACP transacylase (MAT) domain region. Ser-1018 (for acyl/malonyl transferase activity) is an active-site residue. Positions 1310–1624 (TASVHRMVHE…RKVLNTAMPP (315 aa)) are product template (PT) domain. The N-terminal hotdog fold stretch occupies residues 1314–1447 (HRMVHESVEK…SSLHFEQPKV (134 aa)). Residues 1314 to 1619 (HRMVHESVEK…FQGIPRKVLN (306 aa)) enclose the PKS/mFAS DH domain. His-1346 serves as the catalytic Proton acceptor; for dehydratase activity. Residues 1474–1619 (LNSRMSSGVI…FQGIPRKVLN (146 aa)) are C-terminal hotdog fold. Residue Asp-1533 is the Proton donor; for dehydratase activity of the active site. The tract at residues 1619-1655 (NTAMPPPKSQNEAPVRSGPAKPAAKPPRSASSEHSGH) is disordered. Residues 1634 to 1650 (RSGPAKPAAKPPRSASS) show a composition bias toward low complexity. Positions 1678 to 1752 (RNPMLPVFKI…DLAAQLGLDT (75 aa)) constitute a Carrier 1 domain. Ser-1712 carries the post-translational modification O-(pantetheine 4'-phosphoryl)serine. Residues 1755–1790 (SDQSSGQSSSSGGLSPRSDSIGEITSSVTTPPSLSP) show a composition bias toward low complexity. The tract at residues 1755 to 1796 (SDQSSGQSSSSGGLSPRSDSIGEITSSVTTPPSLSPRGSVSG) is disordered. A Carrier 2 domain is found at 1793 to 1870 (SVSGSQCKDV…SFKHMFQQGH (78 aa)). Ser-1830 carries the O-(pantetheine 4'-phosphoryl)serine modification. Residues 1882–2146 (LKQYRATSTL…ERVAAFIRST (265 aa)) are thioesterase (TE) domain. Ser-1973 (for thioesterase activity) is an active-site residue.

The protein operates within pigment biosynthesis. Its function is as follows. Polyketide synthase; part of the Pks1 gene cluster that mediates the biosynthesis of an anthraquinone derivative pigment that contributes to conidial pigmentation that provides protection from UV radiation, heat and cold stress. The polyketide synthase Pks1 produces 1-acetyl-2,4,6,8-tetrahydroxy-9,10-anthraquinone though condensation of acetyl-CoA with malonyl-CoA. The dehydratase EthD and the laccase Mlac1 further convert the anthraquinone derivative into the final conidial pigment. The chain is Polyketide synthase 1 from Metarhizium robertsii (strain ARSEF 23 / ATCC MYA-3075) (Metarhizium anisopliae (strain ARSEF 23)).